The sequence spans 314 residues: tRNA pseudouridine synthase B (314 aa).

His-43 is a substrate binding site. Catalysis depends on Asp-48, which acts as the Nucleophile. Residues Tyr-76, Tyr-179, and Leu-200 each coordinate substrate.

This sequence belongs to the pseudouridine synthase TruB family. Type 1 subfamily.

The catalysed reaction is uridine(55) in tRNA = pseudouridine(55) in tRNA. Responsible for synthesis of pseudouridine from uracil-55 in the psi GC loop of transfer RNAs. This chain is tRNA pseudouridine synthase B, found in Salmonella typhi.